The sequence spans 442 residues: Type 3 secretion system ATPase (442 aa).

173 to 178 contacts ATP; that stretch reads GVGKST.

Belongs to the ATPase alpha/beta chains family. T3SS ATPase subfamily. The core secretion machinery of the T3SS is composed of approximately 20 different proteins, including cytoplasmic components, a base, an export apparatus and a needle. This subunit is part of the cytosolic complex. Forms homohexamers.

Its subcellular location is the cytoplasm. It catalyses the reaction ATP + H2O + cellular proteinSide 1 = ADP + phosphate + cellular proteinSide 2.. ATPase component of the type III secretion system (T3SS), also called injectisome, which is used to inject bacterial effector proteins into eukaryotic host cells. Acts as a molecular motor to provide the energy that is required for the export of proteins. Required for type III secretion apparatus (T3SA) formation, proper protein secretion, host cell invasion and virulence. May play a critical role in T3SS substrate recognition, disassembly of the effector/chaperone complex and unfolding of the effector in an ATP-dependent manner prior to secretion. This is Type 3 secretion system ATPase from Xanthomonas euvesicatoria.